We begin with the raw amino-acid sequence, 64 residues long: Large ribosomal subunit protein bL33 (64 aa).

Belongs to the bacterial ribosomal protein bL33 family.

The sequence is that of Large ribosomal subunit protein bL33 from Gloeothece citriformis (strain PCC 7424) (Cyanothece sp. (strain PCC 7424)).